The chain runs to 313 residues: Homoserine O-succinyltransferase (313 aa).

Residue Cys142 is the Acyl-thioester intermediate of the active site. The substrate site is built by Lys163 and Ser192. His235 acts as the Proton acceptor in catalysis. Residue Glu237 is part of the active site. Arg249 serves as a coordination point for substrate.

Belongs to the MetA family.

The protein resides in the cytoplasm. It catalyses the reaction L-homoserine + succinyl-CoA = O-succinyl-L-homoserine + CoA. It participates in amino-acid biosynthesis; L-methionine biosynthesis via de novo pathway; O-succinyl-L-homoserine from L-homoserine: step 1/1. Transfers a succinyl group from succinyl-CoA to L-homoserine, forming succinyl-L-homoserine. The protein is Homoserine O-succinyltransferase of Vibrio atlanticus (strain LGP32) (Vibrio splendidus (strain Mel32)).